Consider the following 184-residue polypeptide: Translation initiation factor IF-3 (184 aa).

This sequence belongs to the IF-3 family. Monomer.

It is found in the cytoplasm. Functionally, IF-3 binds to the 30S ribosomal subunit and shifts the equilibrium between 70S ribosomes and their 50S and 30S subunits in favor of the free subunits, thus enhancing the availability of 30S subunits on which protein synthesis initiation begins. This Mycoplasma genitalium (strain ATCC 33530 / DSM 19775 / NCTC 10195 / G37) (Mycoplasmoides genitalium) protein is Translation initiation factor IF-3.